The sequence spans 477 residues: MGIKVYNTLTRKKEELKPLRDGEVRMYVCGPTVYDYPHLGHARTYIAFDVIRRYLEHRGFTVLMVMNFTDIDDKIIKRAQETGEDPGKLAERFIKVFLEDMNALKVKPADIYPRVTEHIDDIIEFIKKLKEKGYAYEGSDGVYFEVQKFKDYGKLSGVKIEELRKGARVEPGEGKKNPEDFALWKKAKPGEPKWDSPWGEGRPGWHIECSVMSSKYLGESFDIHGGGNDLIFPHHENEIAQSEACFGHEWVRYWLHTGFVMVKGEKMSKSLGNFVTVRELLQRYSPEVIRLFVLQKHYRSPLDYTEEGLQHAKNNLERLYNTLENIRIAMRNAELSYKWSEKDFEAYEAIREARKKFYDAMDDDFNTAEALKAVFEVSNAINKYILEVDKPKESILRKALEFFKVVSEVFGIFEDYFKEEKKGEEEKLIELLVEVRKQLRKEKRFDLADKIREELRKLGIQLEDKGQETVWKRVKVS.

Cys-29 provides a ligand contact to Zn(2+). The 'HIGH' region signature appears at 31–41 (PTVYDYPHLGH). Residues Cys-209, His-234, and Glu-238 each contribute to the Zn(2+) site. Residues 266–270 (KMSKS) carry the 'KMSKS' region motif. Position 269 (Lys-269) interacts with ATP.

Belongs to the class-I aminoacyl-tRNA synthetase family. Zn(2+) serves as cofactor.

It is found in the cytoplasm. The catalysed reaction is tRNA(Cys) + L-cysteine + ATP = L-cysteinyl-tRNA(Cys) + AMP + diphosphate. The chain is Cysteine--tRNA ligase (cysS) from Pyrococcus abyssi (strain GE5 / Orsay).